The sequence spans 512 residues: Glycerol kinase (512 aa).

Position 14 (threonine 14) interacts with ADP. ATP is bound by residues threonine 14, threonine 15, and serine 16. Threonine 14 provides a ligand contact to sn-glycerol 3-phosphate. Position 18 (arginine 18) interacts with ADP. The sn-glycerol 3-phosphate site is built by arginine 83, glutamate 84, tyrosine 135, and aspartate 244. Positions 83, 84, 135, 244, and 245 each coordinate glycerol. ADP-binding residues include threonine 266, glycine 309, glycine 410, and asparagine 414. Positions 266, 309, and 410 each coordinate ATP.

It belongs to the FGGY kinase family.

It catalyses the reaction glycerol + ATP = sn-glycerol 3-phosphate + ADP + H(+). The protein operates within polyol metabolism; glycerol degradation via glycerol kinase pathway; sn-glycerol 3-phosphate from glycerol: step 1/1. Its activity is regulated as follows. Inhibited by fructose 1,6-bisphosphate (FBP). Functionally, key enzyme in the regulation of glycerol uptake and metabolism. Catalyzes the phosphorylation of glycerol to yield sn-glycerol 3-phosphate. In Gluconobacter oxydans (strain 621H) (Gluconobacter suboxydans), this protein is Glycerol kinase.